The sequence spans 161 residues: Nucleotide-binding protein PBPRA2024 (161 aa).

Belongs to the YajQ family.

Functionally, nucleotide-binding protein. This Photobacterium profundum (strain SS9) protein is Nucleotide-binding protein PBPRA2024.